The sequence spans 87 residues: Signal recognition particle 19 kDa protein (87 aa).

It belongs to the SRP19 family. Part of the signal recognition particle protein translocation system, which is composed of SRP and FtsY. Archaeal SRP consists of a 7S RNA molecule of 300 nucleotides and two protein subunits: SRP54 and SRP19.

It is found in the cytoplasm. In terms of biological role, involved in targeting and insertion of nascent membrane proteins into the cytoplasmic membrane. Binds directly to 7S RNA and mediates binding of the 54 kDa subunit of the SRP. The sequence is that of Signal recognition particle 19 kDa protein from Methanocaldococcus jannaschii (strain ATCC 43067 / DSM 2661 / JAL-1 / JCM 10045 / NBRC 100440) (Methanococcus jannaschii).